Reading from the N-terminus, the 387-residue chain is MNVSGCPGAGNASQAGGGGGWHPEAVIVPLLFALIFLVGTVGNTLVLAVLLRGGQAVSTTNLFILNLGVADLCFILCCVPFQATIYTLDGWVFGSLLCKAVHFLIFLTMHASSFTLAAVSLDRYLAIRYPLHSRELRTPRNALAAIGLIWGLSLLFSGPYLSYYRQSQLANLTVCHPAWSAPRRRAMDICTFVFSYLLPVLVLGLTYARTLRYLWRAVDPVAAGSGARRAKRKVTRMILIVAALFCLCWMPHHALILCVWFGQFPLTRATYALRILSHLVSYANSCVNPIVYALVSKHFRKGFRTICAGLLGRAPGRASGRVCAAARGTHSGSVLERESSDLLHMSEAAGALRPCPGASQPCILEPCPGPSWQGPKAGDSILTVDVA.

The Extracellular segment spans residues 1-28; sequence MNVSGCPGAGNASQAGGGGGWHPEAVIV. 2 N-linked (GlcNAc...) asparagine glycosylation sites follow: Asn-2 and Asn-11. Residues 29 to 49 traverse the membrane as a helical segment; sequence PLLFALIFLVGTVGNTLVLAV. The Cytoplasmic segment spans residues 50–60; it reads LLRGGQAVSTT. The helical transmembrane segment at 61 to 81 threads the bilayer; the sequence is NLFILNLGVADLCFILCCVPF. Topologically, residues 82–99 are extracellular; it reads QATIYTLDGWVFGSLLCK. Cysteines 98 and 175 form a disulfide. A helical membrane pass occupies residues 100–121; sequence AVHFLIFLTMHASSFTLAAVSL. Residues 122–141 are Cytoplasmic-facing; that stretch reads DRYLAIRYPLHSRELRTPRN. The chain crosses the membrane as a helical span at residues 142–162; the sequence is ALAAIGLIWGLSLLFSGPYLS. Over 163-187 the chain is Extracellular; it reads YYRQSQLANLTVCHPAWSAPRRRAM. Residues 188–208 form a helical membrane-spanning segment; that stretch reads DICTFVFSYLLPVLVLGLTYA. Residues 209 to 237 are Cytoplasmic-facing; sequence RTLRYLWRAVDPVAAGSGARRAKRKVTRM. Residues 238–258 traverse the membrane as a helical segment; that stretch reads ILIVAALFCLCWMPHHALILC. The Extracellular segment spans residues 259 to 260; the sequence is VW. Residues 261 to 281 form a helical membrane-spanning segment; it reads FGQFPLTRATYALRILSHLVS. At 282 to 387 the chain is on the cytoplasmic side; that stretch reads YANSCVNPIV…GDSILTVDVA (106 aa).

Belongs to the G-protein coupled receptor 1 family. Expressed abundantly within the central nervous system in both hypothalamus and hippocampus. In peripheral tissues, the strongest expression was observed in heart, kidney, liver, and small intestine.

It is found in the cell membrane. Functionally, receptor for the hormone galanin and GALP. Receptor for the hormone spexin-1. The activity of this receptor is mediated by G proteins that activate the phospholipase C/protein kinase C pathway (via G(q)) and that inhibit adenylyl cyclase (via G(i)). The sequence is that of Galanin receptor type 2 (GALR2) from Homo sapiens (Human).